The following is a 483-amino-acid chain: Aspartyl/glutamyl-tRNA(Asn/Gln) amidotransferase subunit B (483 aa).

Belongs to the GatB/GatE family. GatB subfamily. In terms of assembly, heterotrimer of A, B and C subunits.

The enzyme catalyses L-glutamyl-tRNA(Gln) + L-glutamine + ATP + H2O = L-glutaminyl-tRNA(Gln) + L-glutamate + ADP + phosphate + H(+). The catalysed reaction is L-aspartyl-tRNA(Asn) + L-glutamine + ATP + H2O = L-asparaginyl-tRNA(Asn) + L-glutamate + ADP + phosphate + 2 H(+). Functionally, allows the formation of correctly charged Asn-tRNA(Asn) or Gln-tRNA(Gln) through the transamidation of misacylated Asp-tRNA(Asn) or Glu-tRNA(Gln) in organisms which lack either or both of asparaginyl-tRNA or glutaminyl-tRNA synthetases. The reaction takes place in the presence of glutamine and ATP through an activated phospho-Asp-tRNA(Asn) or phospho-Glu-tRNA(Gln). In Rickettsia conorii (strain ATCC VR-613 / Malish 7), this protein is Aspartyl/glutamyl-tRNA(Asn/Gln) amidotransferase subunit B.